The chain runs to 162 residues: Lipoprotein signal peptidase (162 aa).

2 consecutive transmembrane segments (helical) span residues 66-86 (PFFI…FRKL) and 92-112 (LAAV…IDRV). Catalysis depends on residues D119 and D137. The chain crosses the membrane as a helical span at residues 132-152 (AFNVADSAICVGVALLALDMI).

It belongs to the peptidase A8 family.

It localises to the cell inner membrane. The catalysed reaction is Release of signal peptides from bacterial membrane prolipoproteins. Hydrolyzes -Xaa-Yaa-Zaa-|-(S,diacylglyceryl)Cys-, in which Xaa is hydrophobic (preferably Leu), and Yaa (Ala or Ser) and Zaa (Gly or Ala) have small, neutral side chains.. The protein operates within protein modification; lipoprotein biosynthesis (signal peptide cleavage). This protein specifically catalyzes the removal of signal peptides from prolipoproteins. This is Lipoprotein signal peptidase from Geobacter metallireducens (strain ATCC 53774 / DSM 7210 / GS-15).